The primary structure comprises 153 residues: Membrane-spanning 4-domains subfamily A member 13 (153 aa).

Helical transmembrane passes span 1-21 (MTGI…MGQI), 36-56 (GCSL…RATW), 71-91 (ILCM…LSTF), and 111-131 (VLLS…IFGC).

Belongs to the MS4A family.

The protein localises to the membrane. May be involved in signal transduction as a component of a multimeric receptor complex. In Bos taurus (Bovine), this protein is Membrane-spanning 4-domains subfamily A member 13 (MS4A13).